A 189-amino-acid chain; its full sequence is UPF0301 protein A1C_00165 (189 aa).

It belongs to the UPF0301 (AlgH) family.

This chain is UPF0301 protein A1C_00165, found in Rickettsia akari (strain Hartford).